Reading from the N-terminus, the 120-residue chain is Chaperonin GroEL (120 aa).

Residue 23–27 (DGTTT) participates in ATP binding.

This sequence belongs to the chaperonin (HSP60) family. Forms a cylinder of 14 subunits composed of two heptameric rings stacked back-to-back. Interacts with the co-chaperonin GroES.

The protein localises to the cytoplasm. The catalysed reaction is ATP + H2O + a folded polypeptide = ADP + phosphate + an unfolded polypeptide.. In terms of biological role, together with its co-chaperonin GroES, plays an essential role in assisting protein folding. The GroEL-GroES system forms a nano-cage that allows encapsulation of the non-native substrate proteins and provides a physical environment optimized to promote and accelerate protein folding. The sequence is that of Chaperonin GroEL from Mycobacterium kansasii.